The chain runs to 90 residues: Bombyxin G-1 (90 aa).

An N-terminal signal peptide occupies residues 1-19; it reads MKLIIFVVFCITIYGSTSG. 3 cysteine pairs are disulfide-bonded: Cys28–Cys77, Cys40–Cys90, and Cys76–Cys81. A propeptide spans 49-67 (c peptide like); it reads NTQYEGYHWPLLAYSEERI.

Belongs to the insulin family. In terms of assembly, heterodimer of a B chain and an A chain linked by two disulfide bonds.

The protein localises to the secreted. This chain is Bombyxin G-1 (BBXG1), found in Bombyx mori (Silk moth).